The chain runs to 254 residues: Ribonuclease PH (254 aa).

Phosphate-binding positions include arginine 90 and 128-130 (GTR).

The protein belongs to the RNase PH family. In terms of assembly, homohexameric ring arranged as a trimer of dimers.

It catalyses the reaction tRNA(n+1) + phosphate = tRNA(n) + a ribonucleoside 5'-diphosphate. Functionally, phosphorolytic 3'-5' exoribonuclease that plays an important role in tRNA 3'-end maturation. Removes nucleotide residues following the 3'-CCA terminus of tRNAs; can also add nucleotides to the ends of RNA molecules by using nucleoside diphosphates as substrates, but this may not be physiologically important. Probably plays a role in initiation of 16S rRNA degradation (leading to ribosome degradation) during starvation. This is Ribonuclease PH from Corynebacterium kroppenstedtii (strain DSM 44385 / JCM 11950 / CIP 105744 / CCUG 35717).